We begin with the raw amino-acid sequence, 255 residues long: Taurine import ATP-binding protein TauB (255 aa).

The ABC transporter domain occupies 2–229 (LQISHLYADY…RFVAGESSRS (228 aa)). Position 34 to 41 (34 to 41 (GPSGCGKT)) interacts with ATP.

This sequence belongs to the ABC transporter superfamily. Taurine importer (TC 3.A.1.17.1) family. As to quaternary structure, the complex is composed of two ATP-binding proteins (TauB), two transmembrane proteins (TauC) and a solute-binding protein (TauA).

It is found in the cell inner membrane. The enzyme catalyses taurine(out) + ATP + H2O = taurine(in) + ADP + phosphate + H(+). Functionally, part of the ABC transporter complex TauABC involved in taurine import. Responsible for energy coupling to the transport system. This Shigella boydii serotype 4 (strain Sb227) protein is Taurine import ATP-binding protein TauB.